A 193-amino-acid chain; its full sequence is Cysteine and glycine-rich protein 1 (193 aa).

The LIM zinc-binding 1 domain occupies 10–61 (CGVCQKTVYFAEEVQCEGNSFHKSCFLCMVCKKNLDSTTVAVHGEEIYCKSC). Positions 64–69 (KKYGPK) match the Nuclear localization signal motif. A Phosphoserine modification is found at serine 81. Position 84 is an N6-acetyllysine (lysine 84). Lysine 91 is covalently cross-linked (Glycyl lysine isopeptide (Lys-Gly) (interchain with G-Cter in SUMO2)). An N6-acetyllysine mark is found at lysine 112, lysine 131, lysine 137, and lysine 161. An LIM zinc-binding 2 domain is found at 119 to 170 (CPRCSQAVYAAEKVIGAGKSWHKSCFRCAKCGKGLESTTLADKDGEIYCKGC). Serine 192 is subject to Phosphoserine.

As to quaternary structure, interacts with ASCC1; ASCC2 and TRIP4.

It localises to the nucleus. Its function is as follows. Could play a role in neuronal development. The polypeptide is Cysteine and glycine-rich protein 1 (Csrp1) (Rattus norvegicus (Rat)).